Reading from the N-terminus, the 463-residue chain is Probable Xaa-Pro aminopeptidase pepP (463 aa).

Residues Asp-259, Asp-270, Glu-393, and Glu-433 each coordinate Mn(2+).

Belongs to the peptidase M24B family. Mn(2+) serves as cofactor.

It catalyses the reaction Release of any N-terminal amino acid, including proline, that is linked to proline, even from a dipeptide or tripeptide.. Its function is as follows. Catalyzes the removal of a penultimate prolyl residue from the N-termini of peptides. In Pyrenophora tritici-repentis (strain Pt-1C-BFP) (Wheat tan spot fungus), this protein is Probable Xaa-Pro aminopeptidase pepP (pepP).